A 104-amino-acid chain; its full sequence is uncharacterized protein (104 aa).

This is an uncharacterized protein from Orgyia pseudotsugata (Douglas-fir tussock moth).